The following is a 434-amino-acid chain: Tol-Pal system protein TolB (434 aa).

A signal peptide spans 1 to 21; that stretch reads MTVRRALALAALALAVSPALA. The disordered stretch occupies residues 411-434; the sequence is GDRQTPVTSGKTDLAAPAWGPLAP.

This sequence belongs to the TolB family. As to quaternary structure, the Tol-Pal system is composed of five core proteins: the inner membrane proteins TolA, TolQ and TolR, the periplasmic protein TolB and the outer membrane protein Pal. They form a network linking the inner and outer membranes and the peptidoglycan layer.

Its subcellular location is the periplasm. Its function is as follows. Part of the Tol-Pal system, which plays a role in outer membrane invagination during cell division and is important for maintaining outer membrane integrity. The polypeptide is Tol-Pal system protein TolB (Anaeromyxobacter dehalogenans (strain 2CP-1 / ATCC BAA-258)).